We begin with the raw amino-acid sequence, 199 residues long: Recombination protein RecR (199 aa).

A C4-type zinc finger spans residues 56–71 (CSICFNWSAEDPCEIC). In terms of domain architecture, Toprim spans 79–174 (STWCVVADVK…GLRMTRLAFG (96 aa)).

Belongs to the RecR family.

In terms of biological role, may play a role in DNA repair. It seems to be involved in an RecBC-independent recombinational process of DNA repair. It may act with RecF and RecO. The polypeptide is Recombination protein RecR (Synechococcus sp. (strain JA-3-3Ab) (Cyanobacteria bacterium Yellowstone A-Prime)).